We begin with the raw amino-acid sequence, 145 residues long: Hemoglobin fetal subunit beta (145 aa).

In terms of domain architecture, Globin spans 1–145 (MLTAEEKASV…VANALAHRYH (145 aa)). H62 and H91 together coordinate heme b.

The protein belongs to the globin family. As to quaternary structure, heterotetramer of two alpha chains and two beta chains.

The chain is Hemoglobin fetal subunit beta from Ovis aries (Sheep).